Here is a 333-residue protein sequence, read N- to C-terminus: Ornithine carbamoyltransferase (333 aa).

Residues 56–59, R107, and 134–137 each bind carbamoyl phosphate; these read STRT and HPTQ. Residues N167, D231, and 235–236 contribute to the L-ornithine site; that span reads SM. Residues 273–274 and R318 each bind carbamoyl phosphate; that span reads CL.

This sequence belongs to the aspartate/ornithine carbamoyltransferase superfamily. OTCase family.

The protein resides in the cytoplasm. It catalyses the reaction carbamoyl phosphate + L-ornithine = L-citrulline + phosphate + H(+). Its pathway is amino-acid degradation; L-arginine degradation via ADI pathway; carbamoyl phosphate from L-arginine: step 2/2. In terms of biological role, reversibly catalyzes the transfer of the carbamoyl group from carbamoyl phosphate (CP) to the N(epsilon) atom of ornithine (ORN) to produce L-citrulline. This is Ornithine carbamoyltransferase from Clostridium botulinum (strain 657 / Type Ba4).